The chain runs to 445 residues: Methylthioribose-1-phosphate isomerase (445 aa).

D286 acts as the Proton donor in catalysis.

It belongs to the eIF-2B alpha/beta/delta subunits family. MtnA subfamily.

It localises to the cytoplasm. The protein resides in the nucleus. It catalyses the reaction 5-(methylsulfanyl)-alpha-D-ribose 1-phosphate = 5-(methylsulfanyl)-D-ribulose 1-phosphate. It participates in amino-acid biosynthesis; L-methionine biosynthesis via salvage pathway; L-methionine from S-methyl-5-thio-alpha-D-ribose 1-phosphate: step 1/6. Functionally, catalyzes the interconversion of methylthioribose-1-phosphate (MTR-1-P) into methylthioribulose-1-phosphate (MTRu-1-P). This is Methylthioribose-1-phosphate isomerase (mri1) from Sclerotinia sclerotiorum (strain ATCC 18683 / 1980 / Ss-1) (White mold).